Reading from the N-terminus, the 81-residue chain is WAP four-disulfide core domain protein 13 (81 aa).

Positions 1 to 22 (MRPVSPLQLLLVLSLAPQPVLG) are cleaved as a signal peptide. The region spanning 31–74 (YILEPPPCRSEPGACNMFCTQQEECPEPLQCCSAYCGIVCTSNQ) is the WAP domain. 4 cysteine pairs are disulfide-bonded: Cys-38–Cys-62, Cys-45–Cys-66, Cys-49–Cys-61, and Cys-55–Cys-70.

It localises to the secreted. Putative acid-stable proteinase inhibitor. This chain is WAP four-disulfide core domain protein 13 (Wfdc13), found in Mus musculus (Mouse).